The primary structure comprises 509 residues: ATP synthase subunit alpha (509 aa).

169–176 serves as a coordination point for ATP; the sequence is GDRQTGKT.

It belongs to the ATPase alpha/beta chains family. As to quaternary structure, F-type ATPases have 2 components, CF(1) - the catalytic core - and CF(0) - the membrane proton channel. CF(1) has five subunits: alpha(3), beta(3), gamma(1), delta(1), epsilon(1). CF(0) has three main subunits: a(1), b(2) and c(9-12). The alpha and beta chains form an alternating ring which encloses part of the gamma chain. CF(1) is attached to CF(0) by a central stalk formed by the gamma and epsilon chains, while a peripheral stalk is formed by the delta and b chains.

It is found in the cell inner membrane. It catalyses the reaction ATP + H2O + 4 H(+)(in) = ADP + phosphate + 5 H(+)(out). Functionally, produces ATP from ADP in the presence of a proton gradient across the membrane. The alpha chain is a regulatory subunit. The polypeptide is ATP synthase subunit alpha (Brucella anthropi (strain ATCC 49188 / DSM 6882 / CCUG 24695 / JCM 21032 / LMG 3331 / NBRC 15819 / NCTC 12168 / Alc 37) (Ochrobactrum anthropi)).